Consider the following 121-residue polypeptide: Large ribosomal subunit protein bL12 (121 aa).

It belongs to the bacterial ribosomal protein bL12 family. Homodimer. Part of the ribosomal stalk of the 50S ribosomal subunit. Forms a multimeric L10(L12)X complex, where L10 forms an elongated spine to which 2 to 4 L12 dimers bind in a sequential fashion. Binds GTP-bound translation factors.

In terms of biological role, forms part of the ribosomal stalk which helps the ribosome interact with GTP-bound translation factors. Is thus essential for accurate translation. This chain is Large ribosomal subunit protein bL12, found in Lachnospira eligens (strain ATCC 27750 / DSM 3376 / VPI C15-48 / C15-B4) (Eubacterium eligens).